Consider the following 342-residue polypeptide: Methylthioribose-1-phosphate isomerase (342 aa).

Substrate-binding positions include 44 to 46 (RGA), R85, and Q192. The Proton donor role is filled by D233. A substrate-binding site is contributed by 243–244 (NK).

This sequence belongs to the eIF-2B alpha/beta/delta subunits family. MtnA subfamily.

The catalysed reaction is 5-(methylsulfanyl)-alpha-D-ribose 1-phosphate = 5-(methylsulfanyl)-D-ribulose 1-phosphate. Its pathway is amino-acid biosynthesis; L-methionine biosynthesis via salvage pathway; L-methionine from S-methyl-5-thio-alpha-D-ribose 1-phosphate: step 1/6. In terms of biological role, catalyzes the interconversion of methylthioribose-1-phosphate (MTR-1-P) into methylthioribulose-1-phosphate (MTRu-1-P). This Caldicellulosiruptor saccharolyticus (strain ATCC 43494 / DSM 8903 / Tp8T 6331) protein is Methylthioribose-1-phosphate isomerase.